The chain runs to 349 residues: N-acetyltaurine hydrolase (349 aa).

The a divalent metal cation site is built by H26, H28, E169, H201, H230, and D298.

This sequence belongs to the metallo-dependent hydrolases superfamily. Phosphotriesterase family. It depends on a divalent metal cation as a cofactor.

The protein resides in the cytoplasm. Its subcellular location is the cytosol. It carries out the reaction N-acetyltaurine + H2O = taurine + acetate. It catalyses the reaction N-propanoyltaurine + H2O = propanoate + taurine. The enzyme catalyses N-acetyl-L-methionine + H2O = L-methionine + acetate. The catalysed reaction is N-acetyl-L-isoleucine + H2O = L-isoleucine + acetate. It carries out the reaction N-acetyl-L-leucine + H2O = L-leucine + acetate. It catalyses the reaction N-acetyl-L-valine + H2O = L-valine + acetate. In terms of biological role, N-acetyltaurine hydrolase that catalyzes the hydrolysis of N-acetyltaurine into taurine and acetate. PTER also acts on other N-acetyl amino acids (Met, Ile, Leu, Val) and N-propionyltaurine, but at lower rates. This is N-acetyltaurine hydrolase (pter) from Xenopus tropicalis (Western clawed frog).